The primary structure comprises 188 residues: dCTP deaminase (188 aa).

DCTP contacts are provided by residues 111–116 (KSTYAR), 135–137 (TLE), glutamine 156, tyrosine 170, and glutamine 180. Residue glutamate 137 is the Proton donor/acceptor of the active site.

The protein belongs to the dCTP deaminase family. In terms of assembly, homotrimer.

The catalysed reaction is dCTP + H2O + H(+) = dUTP + NH4(+). It participates in pyrimidine metabolism; dUMP biosynthesis; dUMP from dCTP (dUTP route): step 1/2. In terms of biological role, catalyzes the deamination of dCTP to dUTP. This is dCTP deaminase from Pseudomonas putida (strain ATCC 700007 / DSM 6899 / JCM 31910 / BCRC 17059 / LMG 24140 / F1).